A 265-amino-acid chain; its full sequence is Glutamate racemase (265 aa).

Substrate contacts are provided by residues 10-11 (DS) and 42-43 (YG). Catalysis depends on cysteine 73, which acts as the Proton donor/acceptor. 74–75 (NT) provides a ligand contact to substrate. Catalysis depends on cysteine 180, which acts as the Proton donor/acceptor. 181-182 (TH) serves as a coordination point for substrate.

It belongs to the aspartate/glutamate racemases family.

It catalyses the reaction L-glutamate = D-glutamate. Its pathway is cell wall biogenesis; peptidoglycan biosynthesis. Provides the (R)-glutamate required for cell wall biosynthesis. The polypeptide is Glutamate racemase (Synechococcus sp. (strain CC9605)).